Reading from the N-terminus, the 309-residue chain is MKAIVLLNMGGPNNLEEVELFLRNMFNDKNILPIRNDLLRKFVAYMITQGRKKEARSNYEKLGGKSPLNFYTDRLIAKLQKRLPDVYVTKAMRYTPPFAKEAIKELMYHNVREVFLIPLYPHYSTTTTKSSLEDFYNMAKGVGYHARFHDIANFYENRLYNQAIIERIEEALDGEDTKEYELVFSAHSLPQKIIEKGDPYLQEVQEHVKILTSILEEKFSGYHLAFQSKLGPVKWLEPGLDEKLEELKGKKILVYPISFTLDNSETEFELHIEYAQIAQKIGVKKYKVARCPNESDRFVDALVDIYQRM.

2 residues coordinate Fe cation: His-187 and Glu-265.

The protein belongs to the ferrochelatase family.

The protein localises to the cytoplasm. It carries out the reaction heme b + 2 H(+) = protoporphyrin IX + Fe(2+). The protein operates within porphyrin-containing compound metabolism; protoheme biosynthesis; protoheme from protoporphyrin-IX: step 1/1. Its function is as follows. Catalyzes the ferrous insertion into protoporphyrin IX. This chain is Ferrochelatase, found in Nitratiruptor sp. (strain SB155-2).